The sequence spans 390 residues: Chorismate synthase (390 aa).

NADP(+) contacts are provided by arginine 40 and arginine 46. FMN-binding positions include 129 to 131 (RAS), 249 to 250 (QA), glycine 294, 309 to 313 (KPIPT), and arginine 335.

Belongs to the chorismate synthase family. As to quaternary structure, homotetramer. FMNH2 serves as cofactor.

The catalysed reaction is 5-O-(1-carboxyvinyl)-3-phosphoshikimate = chorismate + phosphate. It functions in the pathway metabolic intermediate biosynthesis; chorismate biosynthesis; chorismate from D-erythrose 4-phosphate and phosphoenolpyruvate: step 7/7. Catalyzes the anti-1,4-elimination of the C-3 phosphate and the C-6 proR hydrogen from 5-enolpyruvylshikimate-3-phosphate (EPSP) to yield chorismate, which is the branch point compound that serves as the starting substrate for the three terminal pathways of aromatic amino acid biosynthesis. This reaction introduces a second double bond into the aromatic ring system. This chain is Chorismate synthase, found in Desulforudis audaxviator (strain MP104C).